The following is a 111-amino-acid chain: MQSNNKLKKNQDFRMVYQKGRSMANKLLIIYIVNNNLEYNRIGFTVSKKVGNSVVRSRVKRLMKESYRLNEGKIKTSHDIVFIARPNCKESTYKEIESALLHLIRKMKLIS.

Belongs to the RnpA family. In terms of assembly, consists of a catalytic RNA component (M1 or rnpB) and a protein subunit.

The catalysed reaction is Endonucleolytic cleavage of RNA, removing 5'-extranucleotides from tRNA precursor.. In terms of biological role, RNaseP catalyzes the removal of the 5'-leader sequence from pre-tRNA to produce the mature 5'-terminus. It can also cleave other RNA substrates such as 4.5S RNA. The protein component plays an auxiliary but essential role in vivo by binding to the 5'-leader sequence and broadening the substrate specificity of the ribozyme. The polypeptide is Ribonuclease P protein component (Alkaliphilus metalliredigens (strain QYMF)).